The chain runs to 525 residues: GMP synthase [glutamine-hydrolyzing] (525 aa).

Residues 9–207 form the Glutamine amidotransferase type-1 domain; the sequence is RILILDFGSQ…VSDICGCEKQ (199 aa). The active-site Nucleophile is the Cys86. Active-site residues include His181 and Glu183. Residues 208–400 enclose the GMPS ATP-PPase domain; it reads WTPAKIIDDA…LGLPYNMLYR (193 aa). 235–241 provides a ligand contact to ATP; it reads SGGVDSS.

As to quaternary structure, homodimer.

It catalyses the reaction XMP + L-glutamine + ATP + H2O = GMP + L-glutamate + AMP + diphosphate + 2 H(+). Its pathway is purine metabolism; GMP biosynthesis; GMP from XMP (L-Gln route): step 1/1. In terms of biological role, catalyzes the synthesis of GMP from XMP. This chain is GMP synthase [glutamine-hydrolyzing], found in Idiomarina loihiensis (strain ATCC BAA-735 / DSM 15497 / L2-TR).